Reading from the N-terminus, the 543-residue chain is CTP synthase (543 aa).

The interval 1–265 (MARYIFITGG…DDEVLAAFGI (265 aa)) is amidoligase domain. S13 serves as a coordination point for CTP. S13 contacts UTP. An ATP-binding site is contributed by 14–19 (SLGKGL). Y54 lines the L-glutamine pocket. D71 contacts ATP. 2 residues coordinate Mg(2+): D71 and E139. CTP is bound by residues 146-148 (DIE), 186-191 (KTKPTQ), and K222. Residues 186–191 (KTKPTQ) and K222 each bind UTP. Position 238–240 (238–240 (RDA)) interacts with ATP. In terms of domain architecture, Glutamine amidotransferase type-1 spans 291–542 (TIAIVGKYTG…IQAAVVQSRL (252 aa)). G353 serves as a coordination point for L-glutamine. The Nucleophile; for glutamine hydrolysis role is filled by C380. L-glutamine-binding positions include 381–384 (FGMQ), E404, and R470. Active-site residues include H515 and E517.

It belongs to the CTP synthase family. Homotetramer.

The enzyme catalyses UTP + L-glutamine + ATP + H2O = CTP + L-glutamate + ADP + phosphate + 2 H(+). It carries out the reaction L-glutamine + H2O = L-glutamate + NH4(+). The catalysed reaction is UTP + NH4(+) + ATP = CTP + ADP + phosphate + 2 H(+). The protein operates within pyrimidine metabolism; CTP biosynthesis via de novo pathway; CTP from UDP: step 2/2. Its activity is regulated as follows. Allosterically activated by GTP, when glutamine is the substrate; GTP has no effect on the reaction when ammonia is the substrate. The allosteric effector GTP functions by stabilizing the protein conformation that binds the tetrahedral intermediate(s) formed during glutamine hydrolysis. Inhibited by the product CTP, via allosteric rather than competitive inhibition. Functionally, catalyzes the ATP-dependent amination of UTP to CTP with either L-glutamine or ammonia as the source of nitrogen. Regulates intracellular CTP levels through interactions with the four ribonucleotide triphosphates. In Nitrobacter winogradskyi (strain ATCC 25391 / DSM 10237 / CIP 104748 / NCIMB 11846 / Nb-255), this protein is CTP synthase.